The sequence spans 239 residues: tRNA (guanine-N(7)-)-methyltransferase (239 aa).

Residues Glu69, Glu94, Asp121, and Asp144 each coordinate S-adenosyl-L-methionine. Residue Asp144 is part of the active site. Residues Lys148, Asp180, and 217-220 contribute to the substrate site; that span reads TKFE.

Belongs to the class I-like SAM-binding methyltransferase superfamily. TrmB family. In terms of assembly, monomer.

It catalyses the reaction guanosine(46) in tRNA + S-adenosyl-L-methionine = N(7)-methylguanosine(46) in tRNA + S-adenosyl-L-homocysteine. It functions in the pathway tRNA modification; N(7)-methylguanine-tRNA biosynthesis. Its function is as follows. Catalyzes the formation of N(7)-methylguanine at position 46 (m7G46) in tRNA. The chain is tRNA (guanine-N(7)-)-methyltransferase from Buchnera aphidicola subsp. Acyrthosiphon pisum (strain 5A).